The following is a 215-amino-acid chain: MGRVPRVGIGGPVGAGKSMLIERVVPVLAARGYHVSIVSNDVISKEDADRMRASLATERGLLPEDLVVGVATGGCPHTAVREDPSMNISIIEEIEAGHPELDLVIIESGGDNITTTFSPALADYFIYMIDVAGGDKYPRKGGLGIESCDLLLINKTDLAGMVGADLGVMRADAERIRGERPFGFVNCMTDEGITEVAERIIHDALLGAPPGHPVG.

Residue 11–18 (GPVGAGKS) coordinates GTP.

This sequence belongs to the SIMIBI class G3E GTPase family. UreG subfamily. Homodimer. UreD, UreF and UreG form a complex that acts as a GTP-hydrolysis-dependent molecular chaperone, activating the urease apoprotein by helping to assemble the nickel containing metallocenter of UreC. The UreE protein probably delivers the nickel.

It is found in the cytoplasm. Functionally, facilitates the functional incorporation of the urease nickel metallocenter. This process requires GTP hydrolysis, probably effectuated by UreG. The chain is Urease accessory protein UreG from Cenarchaeum symbiosum (strain A).